We begin with the raw amino-acid sequence, 398 residues long: MEMSKASKQTTRHEESEHVQNPEPDQILSPRRSLELKQRKWWISVSLCLFLVLLGDSLVMLLLNFFYVQMKQDRREEYDQDLQYKGTWTQALIQNAAFPILIPLFFIFPKPKQHLETNNTSFLSLRLFFLYLSLGVLVAAHSKLFALGKLVSNYGIFSLISTTQLIFTAVLTAIINRFKFTRWIIISILLTIVIYVLGTPDFGGQPHDGEEFGYNIQAWLAFSATIAFSLSLCLIQLGFEKLQVKTKRYGNEKVFRMVLEMQICVAFVASVVCLVGLFASDEYKELKGDSKRFKKGETYYVLSLVGLALSWQVWAVGMIGLVHYVSGLFGDVVHMCASPFVALFVVLAFDFMDDVFSWPRIGALIGTVLALGSYFYTLHKRNKKKMAELNQSENNVEV.

The interval 1–26 (MEMSKASKQTTRHEESEHVQNPEPDQ) is disordered. Residues 11–20 (TRHEESEHVQ) show a composition bias toward basic and acidic residues. Ser-29 is modified (phosphoserine). 10 consecutive transmembrane segments (helical) span residues 43 to 63 (ISVS…MLLL), 88 to 108 (WTQA…FFIF), 127 to 147 (LFFL…LFAL), 155 to 175 (GIFS…TAII), 183 to 203 (WIII…PDFG), 219 to 239 (WLAF…QLGF), 258 to 278 (VLEM…VGLF), 301 to 321 (VLSL…MIGL), 332 to 352 (VVHM…FDFM), and 355 to 375 (VFSW…GSYF).

This sequence belongs to the purine permeases (TC 2.A.7.14) family.

It is found in the membrane. This Arabidopsis thaliana (Mouse-ear cress) protein is Probable purine permease 17 (PUP17).